The primary structure comprises 192 residues: uncharacterized protein (192 aa).

The 132-residue stretch at 29–160 folds into the Nudix hydrolase domain; the sequence is QRQAAVLVPI…PLDIERKQQR (132 aa). The Nudix box signature appears at 67–89; the sequence is GAADKTDRSIIETALREAQEEVA. Positions 83 and 87 each coordinate Mg(2+).

It belongs to the Nudix hydrolase family. PCD1 subfamily. It depends on Mn(2+) as a cofactor. Requires Mg(2+) as cofactor.

Probably mediates the hydrolysis of some nucleoside diphosphate derivatives. This is an uncharacterized protein from Pectobacterium atrosepticum (strain SCRI 1043 / ATCC BAA-672) (Erwinia carotovora subsp. atroseptica).